The primary structure comprises 287 residues: Pyridoxal kinase PdxY (287 aa).

Substrate is bound by residues Ser-10 and 45-46 (TQ). ATP-binding positions include Asp-112, Ala-144, Glu-149, Lys-182, and 209–212 (RPLV). Position 224 (Asp-224) interacts with substrate.

It belongs to the pyridoxine kinase family. PdxY subfamily. As to quaternary structure, homodimer. Mg(2+) is required as a cofactor.

It carries out the reaction pyridoxal + ATP = pyridoxal 5'-phosphate + ADP + H(+). It participates in cofactor metabolism; pyridoxal 5'-phosphate salvage; pyridoxal 5'-phosphate from pyridoxal: step 1/1. Its function is as follows. Pyridoxal kinase involved in the salvage pathway of pyridoxal 5'-phosphate (PLP). Catalyzes the phosphorylation of pyridoxal to PLP. The sequence is that of Pyridoxal kinase PdxY from Escherichia coli O157:H7.